The sequence spans 327 residues: GMP reductase (327 aa).

Catalysis depends on C176, which acts as the Thioimidate intermediate. 205-228 is an NADP(+) binding site; the sequence is IIADGGIRTHGDIVKSIRFGATMV.

Belongs to the IMPDH/GMPR family. GuaC type 2 subfamily.

The catalysed reaction is IMP + NH4(+) + NADP(+) = GMP + NADPH + 2 H(+). Catalyzes the irreversible NADPH-dependent deamination of GMP to IMP. It functions in the conversion of nucleobase, nucleoside and nucleotide derivatives of G to A nucleotides, and in maintaining the intracellular balance of A and G nucleotides. The polypeptide is GMP reductase (Helicobacter pylori (strain ATCC 700392 / 26695) (Campylobacter pylori)).